The chain runs to 166 residues: UPF0304 protein VFMJ11_1926 (166 aa).

This sequence belongs to the UPF0304 family.

This Aliivibrio fischeri (strain MJ11) (Vibrio fischeri) protein is UPF0304 protein VFMJ11_1926.